Reading from the N-terminus, the 83-residue chain is Short neurotoxin 1 (83 aa).

Residues 1 to 21 (MKTLLLTLVVVTIVCLDLGYT) form the signal peptide. Disulfide bonds link Cys-24–Cys-45, Cys-38–Cys-62, Cys-64–Cys-75, and Cys-76–Cys-81.

Belongs to the three-finger toxin family. Short-chain subfamily. Type I alpha-neurotoxin sub-subfamily. As to expression, expressed by the venom gland.

Its subcellular location is the secreted. Functionally, binds to muscle nicotinic acetylcholine receptor (nAChR) and inhibit acetylcholine from binding to the receptor, thereby impairing neuromuscular transmission. This is Short neurotoxin 1 from Pseudechis australis (Mulga snake).